A 244-amino-acid chain; its full sequence is Aspartate/glutamate leucyltransferase (244 aa).

It belongs to the R-transferase family. Bpt subfamily.

It is found in the cytoplasm. The enzyme catalyses N-terminal L-glutamyl-[protein] + L-leucyl-tRNA(Leu) = N-terminal L-leucyl-L-glutamyl-[protein] + tRNA(Leu) + H(+). The catalysed reaction is N-terminal L-aspartyl-[protein] + L-leucyl-tRNA(Leu) = N-terminal L-leucyl-L-aspartyl-[protein] + tRNA(Leu) + H(+). Its function is as follows. Functions in the N-end rule pathway of protein degradation where it conjugates Leu from its aminoacyl-tRNA to the N-termini of proteins containing an N-terminal aspartate or glutamate. The sequence is that of Aspartate/glutamate leucyltransferase from Bordetella parapertussis (strain 12822 / ATCC BAA-587 / NCTC 13253).